The following is a 311-amino-acid chain: Pantothenate kinase (311 aa).

93-100 (GSVAVGKS) is a binding site for ATP.

Belongs to the prokaryotic pantothenate kinase family.

The protein resides in the cytoplasm. It carries out the reaction (R)-pantothenate + ATP = (R)-4'-phosphopantothenate + ADP + H(+). It functions in the pathway cofactor biosynthesis; coenzyme A biosynthesis; CoA from (R)-pantothenate: step 1/5. The chain is Pantothenate kinase (coaA) from Haemophilus influenzae (strain ATCC 51907 / DSM 11121 / KW20 / Rd).